The primary structure comprises 130 residues: Histone H2A type 1-F (130 aa).

Residues 1 to 22 (MSGRGKQGGKARAKAKTRSSRA) are disordered. Serine 2 is subject to Phosphoserine; by RPS6KA5. Residue arginine 4 is modified to Citrulline; alternate. Arginine 4 is subject to Symmetric dimethylarginine; by PRMT5; alternate. An N6-(2-hydroxyisobutyryl)lysine; alternate modification is found at lysine 6. N6-(beta-hydroxybutyryl)lysine; alternate is present on lysine 6. Over residues 7–19 (QGGKARAKAKTRS) the composition is skewed to basic residues. Residue lysine 10 is modified to N6-(2-hydroxyisobutyryl)lysine. Residue lysine 10 is modified to N6-lactoyllysine; alternate. Lysine 37 is subject to N6-(2-hydroxyisobutyryl)lysine; alternate. Lysine 37 bears the N6-(beta-hydroxybutyryl)lysine; alternate mark. The residue at position 37 (lysine 37) is an N6-crotonyllysine; alternate. Residues lysine 75, lysine 76, and lysine 96 each carry the N6-(2-hydroxyisobutyryl)lysine modification. Lysine 96 is modified (N6-glutaryllysine; alternate). Glutamine 105 bears the N5-methylglutamine mark. Lysine 119 is subject to N6-(2-hydroxyisobutyryl)lysine; alternate. Lysine 119 and lysine 120 each carry N6-crotonyllysine; alternate. 2 positions are modified to N6-glutaryllysine; alternate: lysine 119 and lysine 120. At lysine 120 the chain carries N6-(beta-hydroxybutyryl)lysine; alternate. Residue lysine 120 forms a Glycyl lysine isopeptide (Lys-Gly) (interchain with G-Cter in ubiquitin); alternate linkage. A Phosphothreonine; by DCAF1 modification is found at threonine 121. At lysine 126 the chain carries N6-(beta-hydroxybutyryl)lysine; alternate. Lysine 126 carries the post-translational modification N6-crotonyllysine; alternate. Lysine 126 is subject to N6-glutaryllysine; alternate.

This sequence belongs to the histone H2A family. As to quaternary structure, the nucleosome is a histone octamer containing two molecules each of H2A, H2B, H3 and H4 assembled in one H3-H4 heterotetramer and two H2A-H2B heterodimers. The octamer wraps approximately 147 bp of DNA. Deiminated on Arg-4 in granulocytes upon calcium entry. Post-translationally, monoubiquitination of Lys-120 (H2AK119Ub) by RING1, TRIM37 and RNF2/RING2 complex gives a specific tag for epigenetic transcriptional repression and participates in X chromosome inactivation of female mammals. It is involved in the initiation of both imprinted and random X inactivation. Ubiquitinated H2A is enriched in inactive X chromosome chromatin. Ubiquitination of H2A functions downstream of methylation of 'Lys-27' of histone H3 (H3K27me). H2AK119Ub by RNF2/RING2 can also be induced by ultraviolet and may be involved in DNA repair. Following DNA double-strand breaks (DSBs), it is ubiquitinated through 'Lys-63' linkage of ubiquitin moieties by the E2 ligase UBE2N and the E3 ligases RNF8 and RNF168, leading to the recruitment of repair proteins to sites of DNA damage. Ubiquitination at Lys-14 and Lys-16 (H2AK13Ub and H2AK15Ub, respectively) in response to DNA damage is initiated by RNF168 that mediates monoubiquitination at these 2 sites, and 'Lys-63'-linked ubiquitin are then conjugated to monoubiquitin; RNF8 is able to extend 'Lys-63'-linked ubiquitin chains in vitro. H2AK119Ub and ionizing radiation-induced 'Lys-63'-linked ubiquitination (H2AK13Ub and H2AK15Ub) are distinct events. In terms of processing, phosphorylation on Ser-2 (H2AS1ph) is enhanced during mitosis. Phosphorylation on Ser-2 by RPS6KA5/MSK1 directly represses transcription. Acetylation of H3 inhibits Ser-2 phosphorylation by RPS6KA5/MSK1. Phosphorylation at Thr-121 (H2AT120ph) by DCAF1 is present in the regulatory region of many tumor suppresor genes and down-regulates their transcription. Symmetric dimethylation on Arg-4 by the PRDM1/PRMT5 complex may play a crucial role in the germ-cell lineage. Post-translationally, glutamine methylation at Gln-105 (H2AQ104me) by FBL is specifically dedicated to polymerase I. It is present at 35S ribosomal DNA locus and impairs binding of the FACT complex. In terms of processing, crotonylation (Kcr) is specifically present in male germ cells and marks testis-specific genes in post-meiotic cells, including X-linked genes that escape sex chromosome inactivation in haploid cells. Crotonylation marks active promoters and enhancers and confers resistance to transcriptional repressors. It is also associated with post-meiotically activated genes on autosomes. Hydroxybutyrylation of histones is induced by starvation. Post-translationally, lactylated in macrophages by EP300/P300 by using lactoyl-CoA directly derived from endogenous or exogenous lactate, leading to stimulates gene transcription.

It localises to the nucleus. It is found in the chromosome. Core component of nucleosome. Nucleosomes wrap and compact DNA into chromatin, limiting DNA accessibility to the cellular machineries which require DNA as a template. Histones thereby play a central role in transcription regulation, DNA repair, DNA replication and chromosomal stability. DNA accessibility is regulated via a complex set of post-translational modifications of histones, also called histone code, and nucleosome remodeling. This Mus musculus (Mouse) protein is Histone H2A type 1-F (Hist1h2af).